The primary structure comprises 378 residues: Protein-glutamate methylesterase/protein-glutamine glutaminase 2 (378 aa).

Residues 4 to 121 (KVLVVDDSGF…SRNPEKVKQL (118 aa)) form the Response regulatory domain. Asp-55 carries the post-translational modification 4-aspartylphosphate. The segment at 141–188 (APAPAAAPTPAPIPAAAPSSFGSHSAPARPAPAPAPTRAPAASASSPA) is disordered. The segment covering 145–155 (AAAPTPAPIPA) has biased composition (pro residues). 2 stretches are compositionally biased toward low complexity: residues 156-168 (AAPS…SAPA) and 178-188 (RAPAASASSPA). The CheB-type methylesterase domain occupies 187-378 (PAPKRKNYKL…IGKHIVEACV (192 aa)). Residues Ser-202, His-229, and Asp-322 contribute to the active site.

Belongs to the CheB family. Phosphorylated by CheA. Phosphorylation of the N-terminal regulatory domain activates the methylesterase activity.

The protein resides in the cytoplasm. It catalyses the reaction [protein]-L-glutamate 5-O-methyl ester + H2O = L-glutamyl-[protein] + methanol + H(+). It carries out the reaction L-glutaminyl-[protein] + H2O = L-glutamyl-[protein] + NH4(+). Involved in chemotaxis. Part of a chemotaxis signal transduction system that modulates chemotaxis in response to various stimuli. Catalyzes the demethylation of specific methylglutamate residues introduced into the chemoreceptors (methyl-accepting chemotaxis proteins or MCP) by CheR. Also mediates the irreversible deamidation of specific glutamine residues to glutamic acid. In Pseudomonas fluorescens (strain Pf0-1), this protein is Protein-glutamate methylesterase/protein-glutamine glutaminase 2.